Consider the following 234-residue polypeptide: Small ribosomal subunit protein uS3 (234 aa).

In terms of domain architecture, KH type-2 spans 39–107 (IRKFLKKELY…EVSINIKEVK (69 aa)).

This sequence belongs to the universal ribosomal protein uS3 family. Part of the 30S ribosomal subunit. Forms a tight complex with proteins S10 and S14.

Functionally, binds the lower part of the 30S subunit head. Binds mRNA in the 70S ribosome, positioning it for translation. In Helicobacter pylori (strain P12), this protein is Small ribosomal subunit protein uS3.